Consider the following 481-residue polypeptide: tRNA:m(4)X modification enzyme TRM13 homolog (481 aa).

A CHHC U11-48K-type zinc finger spans residues 56–83 (RILCPLDPKHTVYEDQLAKHLKKCNSRE). Zn(2+) contacts are provided by C59, H65, H75, and C79. The stretch at 113-140 (SLSEEQLENLIKKLRKASEGLNSTHEDH) forms a coiled coil. Disordered stretches follow at residues 296 to 319 (AKRI…SEKD) and 379 to 414 (LEGS…TDSL). Basic and acidic residues predominate over residues 385-407 (TPERKDAQRDENEEHDDGGDRLT).

Belongs to the methyltransferase TRM13 family.

It catalyses the reaction cytidine(4) in tRNA(Pro) + S-adenosyl-L-methionine = 2'-O-methylcytidine(4) in tRNA(Pro) + S-adenosyl-L-homocysteine + H(+). The catalysed reaction is cytidine(4) in tRNA(Gly)(GCC) + S-adenosyl-L-methionine = 2'-O-methylcytidine(4) in tRNA(Gly)(GCC) + S-adenosyl-L-homocysteine + H(+). The enzyme catalyses adenosine(4) in tRNA(His) + S-adenosyl-L-methionine = 2'-O-methyladenosine(4) in tRNA(His) + S-adenosyl-L-homocysteine + H(+). Functionally, tRNA methylase which 2'-O-methylates cytidine(4) in tRNA(Pro) and tRNA(Gly)(GCC), and adenosine(4) in tRNA(His). This is tRNA:m(4)X modification enzyme TRM13 homolog (Trmt13) from Mus musculus (Mouse).